The sequence spans 471 residues: Ribulose bisphosphate carboxylase large chain (471 aa).

N119 and T169 together coordinate substrate. The active-site Proton acceptor is the K171. Residue K173 coordinates substrate. The Mg(2+) site is built by K197, D199, and E200. N6-carboxylysine is present on K197. Residue H290 is the Proton acceptor of the active site. The substrate site is built by R291, H323, and S375.

The protein belongs to the RuBisCO large chain family. Type I subfamily. In terms of assembly, heterohexadecamer of 8 large chains and 8 small chains; disulfide-linked. The disulfide link is formed within the large subunit homodimers. The cofactor is Mg(2+). In terms of processing, the disulfide bond which can form in the large chain dimeric partners within the hexadecamer appears to be associated with oxidative stress and protein turnover.

Its subcellular location is the carboxysome. It catalyses the reaction 2 (2R)-3-phosphoglycerate + 2 H(+) = D-ribulose 1,5-bisphosphate + CO2 + H2O. It carries out the reaction D-ribulose 1,5-bisphosphate + O2 = 2-phosphoglycolate + (2R)-3-phosphoglycerate + 2 H(+). Its function is as follows. RuBisCO catalyzes two reactions: the carboxylation of D-ribulose 1,5-bisphosphate, the primary event in carbon dioxide fixation, as well as the oxidative fragmentation of the pentose substrate in the photorespiration process. Both reactions occur simultaneously and in competition at the same active site. This Crocosphaera subtropica (strain ATCC 51142 / BH68) (Cyanothece sp. (strain ATCC 51142)) protein is Ribulose bisphosphate carboxylase large chain.